The following is an 81-amino-acid chain: ATP synthase subunit c (81 aa).

2 consecutive transmembrane segments (helical) span residues F7–I27 and F53–F73.

The protein belongs to the ATPase C chain family. In terms of assembly, F-type ATPases have 2 components, F(1) - the catalytic core - and F(0) - the membrane proton channel. F(1) has five subunits: alpha(3), beta(3), gamma(1), delta(1), epsilon(1). F(0) has three main subunits: a(1), b(2) and c(10-14). The alpha and beta chains form an alternating ring which encloses part of the gamma chain. F(1) is attached to F(0) by a central stalk formed by the gamma and epsilon chains, while a peripheral stalk is formed by the delta and b chains.

The protein localises to the cell inner membrane. Functionally, f(1)F(0) ATP synthase produces ATP from ADP in the presence of a proton or sodium gradient. F-type ATPases consist of two structural domains, F(1) containing the extramembraneous catalytic core and F(0) containing the membrane proton channel, linked together by a central stalk and a peripheral stalk. During catalysis, ATP synthesis in the catalytic domain of F(1) is coupled via a rotary mechanism of the central stalk subunits to proton translocation. Its function is as follows. Key component of the F(0) channel; it plays a direct role in translocation across the membrane. A homomeric c-ring of between 10-14 subunits forms the central stalk rotor element with the F(1) delta and epsilon subunits. This Azoarcus sp. (strain BH72) protein is ATP synthase subunit c.